We begin with the raw amino-acid sequence, 715 residues long: Polyribonucleotide nucleotidyltransferase (715 aa).

2 residues coordinate Mg(2+): D498 and D504. The KH domain maps to 565 to 625 (PKVCMMQIKP…ETVKKTVAFI (61 aa)). The 72-residue stretch at 635 to 706 (GTCYQASILR…DRGRIDFLLL (72 aa)) folds into the S1 motif domain.

Belongs to the polyribonucleotide nucleotidyltransferase family. Requires Mg(2+) as cofactor.

It localises to the cytoplasm. The catalysed reaction is RNA(n+1) + phosphate = RNA(n) + a ribonucleoside 5'-diphosphate. Its function is as follows. Involved in mRNA degradation. Catalyzes the phosphorolysis of single-stranded polyribonucleotides processively in the 3'- to 5'-direction. This chain is Polyribonucleotide nucleotidyltransferase, found in Onion yellows phytoplasma (strain OY-M).